We begin with the raw amino-acid sequence, 146 residues long: Large ribosomal subunit protein uL15 (146 aa).

Positions 1 to 65 (MSDIQLNSLK…GQMPLQRRLP (65 aa)) are disordered. The segment covering 24-34 (RGIGSGLGKTA) has biased composition (gly residues).

The protein belongs to the universal ribosomal protein uL15 family. In terms of assembly, part of the 50S ribosomal subunit.

Binds to the 23S rRNA. This chain is Large ribosomal subunit protein uL15, found in Bordetella avium (strain 197N).